Here is a 541-residue protein sequence, read N- to C-terminus: Formimidoyltransferase-cyclodeaminase (541 aa).

Residues 1-181 (MSQLVECVPN…GATVAGARKF (181 aa)) form a formiminotransferase N-subdomain region. Residue histidine 82 is the For formimidoyltransferase activity of the active site. 163–172 (GPSAFVPSWG) contacts folate. Residues 182 to 326 (LLAFNINLLS…PKERIIEYLV (145 aa)) form a formiminotransferase C-subdomain region. The tract at residues 327–334 (PEAGPEQS) is linker. Residues 335–541 (LLHKPLRTFV…VLDRLEARQA (207 aa)) form a cyclodeaminase/cyclohydrolase region. Aspartate 412 functions as the For cyclodeaminase activity in the catalytic mechanism. Serine 520 carries the post-translational modification Phosphoserine.

It in the C-terminal section; belongs to the cyclodeaminase/cyclohydrolase family. The protein in the N-terminal section; belongs to the formiminotransferase family. As to quaternary structure, homooctamer, including four polyglutamate binding sites. The subunits are arranged as a tetramer of dimers, and form a planar ring-shaped structure.

The protein localises to the cytoplasm. The protein resides in the cytosol. It is found in the golgi apparatus. It localises to the cytoskeleton. Its subcellular location is the microtubule organizing center. The protein localises to the centrosome. The protein resides in the centriole. It carries out the reaction 5-formimidoyltetrahydrofolate + L-glutamate = N-formimidoyl-L-glutamate + (6S)-5,6,7,8-tetrahydrofolate. It catalyses the reaction 5-formimidoyltetrahydrofolate + 2 H(+) = (6R)-5,10-methenyltetrahydrofolate + NH4(+). Its pathway is amino-acid degradation; L-histidine degradation into L-glutamate; L-glutamate from N-formimidoyl-L-glutamate (transferase route): step 1/1. In terms of biological role, folate-dependent enzyme, that displays both transferase and deaminase activity. Serves to channel one-carbon units from formiminoglutamate to the folate pool. Functionally, binds and promotes bundling of vimentin filaments originating from the Golgi. This chain is Formimidoyltransferase-cyclodeaminase (FTCD), found in Sus scrofa (Pig).